Consider the following 551-residue polypeptide: HTH-type transcriptional regulator SgrR (551 aa).

In terms of domain architecture, HTH marR-type spans 1 to 116 (MPSARLQQQF…LVSHLGRSFR (116 aa)). A DNA-binding region (H-T-H motif) is located at residues 26 to 49 (LNELAALLSCSRRHMRTLLNTMQD). Residues 163–492 (ELEADIAHHW…IDWQADAARW (330 aa)) are solute-binding.

Its function is as follows. Activates the small RNA gene sgrS under glucose-phosphate stress conditions as well as yfdZ. Represses its own transcription under both stress and non-stress conditions. Might act as a sensor of the intracellular accumulation of phosphoglucose by binding these molecules in its C-terminal solute-binding domain. This Shigella boydii serotype 4 (strain Sb227) protein is HTH-type transcriptional regulator SgrR.